Consider the following 212-residue polypeptide: MTDTKKTLFSAPTDEQLDTLTLTIESNLVPSISELEAIAKDWKTLGLQEADFTANAIKIAWFCYHSGSSESVQVQGNSTSDKIPLYQLAGVVRQHSTLRRFCRYFAKVIWNYALRKNQPPANWASQNYKEADRFAAFDFFEGVSSSAALSPPGGLIREPSPNERMANETNKNVHLYQTASRGSNLATTSTVATKGAYSTNASNAGFPYHRPE.

Belongs to the potexvirus capsid protein family.

It localises to the virion. Functionally, required for genome encapsidation. Forms ribonucleoprotein complexes along with TGB1 helicase and viral RNA. This is Coat protein from Chenopodium album (Fat hen).